Consider the following 151-residue polypeptide: Probable cGMP 3',5'-cyclic phosphodiesterase subunit delta (151 aa).

This sequence belongs to the PDE6D/unc-119 family. Interacts with Pde6.

The protein localises to the nucleus. Its subcellular location is the cytoplasm. The chain is Probable cGMP 3',5'-cyclic phosphodiesterase subunit delta from Drosophila persimilis (Fruit fly).